The primary structure comprises 593 residues: Salivary alpha-glucosidase (593 aa).

The first 19 residues, M1–G19, serve as a signal peptide directing secretion. Ca(2+)-binding residues include D49, D51, D53, I55, D57, and N130. Residues N130 and N163 are each glycosylated (N-linked (GlcNAc...) asparagine). D201, Y235, L236, and E238 together coordinate Ca(2+). N-linked (GlcNAc...) asparagine glycosylation is found at N295, N310, N338, N414, N445, and N453. Residue N338 participates in N-acetyl-beta-D-glucosamine binding.

This sequence belongs to the glycosyl hydrolase 13 family. As to expression, saliva (at protein level). Proximal lateral lobes of the salivary gland (at protein level).

It is found in the secreted. The catalysed reaction is Hydrolysis of terminal, non-reducing (1-&gt;4)-linked alpha-D-glucose residues with release of alpha-D-glucose.. Its function is as follows. Functions as a glucosidase that shows high activity toward sucrose, a major component of nectar. Assists the mosquito in its sugar-feeding capabilities. The protein is Salivary alpha-glucosidase of Anopheles gambiae (African malaria mosquito).